Reading from the N-terminus, the 2195-residue chain is Integrator complex subunit 1 (2195 aa).

The segment at 1-86 (MNRAKPTTVR…RPKLSSTPPL (86 aa)) is disordered. Residue Ser-13 is modified to Phosphoserine. The span at 34–45 (GQASESKTTSTL) shows a compositional bias: polar residues. Position 47 is an N6-acetyllysine (Lys-47). A compositionally biased stretch (low complexity) spans 62-75 (SASLSGTSALTGLT). Thr-83 is modified (phosphothreonine). Ser-87 is modified (phosphoserine). A disordered region spans residues 267 to 297 (LLQGEGARSGGELGAGSSPHPSLTEEEDSQT). Ser-307 and Ser-926 each carry phosphoserine. A disordered region spans residues 923 to 947 (STASGEEDDEGESREQKAKKRQRQQ). A helical transmembrane segment spans residues 1165–1185 (HILVVHAMVILLTLGPPRSGD). Positions 1313-1347 (SLPPRRDSTEAPKPESSPEPPPGQGRTRAGTQVPV) are disordered. Over residues 1316-1325 (PRRDSTEAPK) the composition is skewed to basic and acidic residues. Ser-1320, Ser-1328, and Ser-1329 each carry phosphoserine.

The protein belongs to the Integrator subunit 1 family. Component of the Integrator complex, composed of core subunits INTS1, INTS2, INTS3, INTS4, INTS5, INTS6, INTS7, INTS8, INTS9/RC74, INTS10, INTS11/CPSF3L, INTS12, INTS13, INTS14 and INTS15. The core complex associates with protein phosphatase 2A subunits PPP2CA and PPP2R1A, to form the Integrator-PP2A (INTAC) complex. Interacts with ESRRB, ESRRB is not a core component of the Integrator complex and this association is a bridge for the interaction with the multiprotein complex Integrator; attracts the transcriptional machinery.

The protein localises to the nucleus. It localises to the nucleus membrane. Its function is as follows. Component of the integrator complex, a multiprotein complex that terminates RNA polymerase II (Pol II) transcription in the promoter-proximal region of genes. The integrator complex provides a quality checkpoint during transcription elongation by driving premature transcription termination of transcripts that are unfavorably configured for transcriptional elongation: the complex terminates transcription by (1) catalyzing dephosphorylation of the C-terminal domain (CTD) of Pol II subunit POLR2A/RPB1 and SUPT5H/SPT5, (2) degrading the exiting nascent RNA transcript via endonuclease activity and (3) promoting the release of Pol II from bound DNA. The integrator complex is also involved in terminating the synthesis of non-coding Pol II transcripts, such as enhancer RNAs (eRNAs), small nuclear RNAs (snRNAs), telomerase RNAs and long non-coding RNAs (lncRNAs). Within the integrator complex, INTS1 is involved in the post-termination step: INTS1 displaces INTS3 and the SOSS factors, allowing the integrator complex to return to the closed conformation, ready to bind to the paused elongation complex for another termination cycle. Mediates recruitment of cytoplasmic dynein to the nuclear envelope, probably as component of the integrator complex. This Mus musculus (Mouse) protein is Integrator complex subunit 1.